We begin with the raw amino-acid sequence, 399 residues long: Zinc finger TRAF-type-containing protein 1 (399 aa).

Over residues 1–13 (MSGAEEAGGGGPA) the composition is skewed to gly residues. The segment at 1-21 (MSGAEEAGGGGPAAGPAGAVP) is disordered. An RING-type; degenerate zinc finger spans residues 106–151 (CTVCLDLPKASVYQCTNGHLMCAGCFIHLLADARLKEEQATCPNCR). A TRAF-type zinc finger spans residues 152 to 210 (CEISKSLCCRNLAVEKAVSELPSECGFCLRQFPRSLLERHQKEECQDRVTQCKYKRIGC).

It belongs to the ZFTRAF1 family. In terms of assembly, interacts with LGALS3. In terms of tissue distribution, expressed in heart, brain, liver, testis and kidney.

It localises to the cytoplasm. The protein resides in the perinuclear region. The chain is Zinc finger TRAF-type-containing protein 1 from Mus musculus (Mouse).